A 199-amino-acid chain; its full sequence is Adenylyl-sulfate kinase (199 aa).

34 to 41 (GLSGSGKS) is a binding site for ATP. The Phosphoserine intermediate role is filled by S108.

This sequence belongs to the APS kinase family.

It carries out the reaction adenosine 5'-phosphosulfate + ATP = 3'-phosphoadenylyl sulfate + ADP + H(+). It participates in sulfur metabolism; hydrogen sulfide biosynthesis; sulfite from sulfate: step 2/3. Catalyzes the synthesis of activated sulfate. The sequence is that of Adenylyl-sulfate kinase from Oceanobacillus iheyensis (strain DSM 14371 / CIP 107618 / JCM 11309 / KCTC 3954 / HTE831).